The sequence spans 22 residues: FKGGGPYGQGVTRGQDLSGKDF.

Residues 1–22 are disordered; sequence FKGGGPYGQGVTRGQDLSGKDF.

To A.thaliana At2g44920.

The protein resides in the plastid. Its subcellular location is the chloroplast thylakoid lumen. The sequence is that of Thylakoid lumenal 11 kDa protein from Spinacia oleracea (Spinach).